The primary structure comprises 247 residues: Uroporphyrinogen-III C-methyltransferase (247 aa).

S-adenosyl-L-homocysteine-binding positions include proline 12, 117 to 118 (TA), methionine 168, alanine 197, and alanine 225.

This sequence belongs to the precorrin methyltransferase family.

The enzyme catalyses uroporphyrinogen III + 2 S-adenosyl-L-methionine = precorrin-2 + 2 S-adenosyl-L-homocysteine + H(+). The protein operates within cofactor biosynthesis; adenosylcobalamin biosynthesis; precorrin-2 from uroporphyrinogen III: step 1/1. It functions in the pathway porphyrin-containing compound metabolism; siroheme biosynthesis; precorrin-2 from uroporphyrinogen III: step 1/1. Functionally, catalyzes the two successive C-2 and C-7 methylation reactions involved in the conversion of uroporphyrinogen III to precorrin-2 via the intermediate formation of precorrin-1. It is a step in the biosynthesis of both cobalamin (vitamin B12) and siroheme. This chain is Uroporphyrinogen-III C-methyltransferase, found in Pseudomonas fluorescens.